A 646-amino-acid chain; its full sequence is Stage V sporulation protein D (646 aa).

The active-site Acyl-ester intermediate is the Ser294. In terms of domain architecture, PASTA spans Asp580–Glu638.

This sequence belongs to the transpeptidase family.

The protein localises to the cell membrane. It carries out the reaction Preferential cleavage: (Ac)2-L-Lys-D-Ala-|-D-Ala. Also transpeptidation of peptidyl-alanyl moieties that are N-acyl substituents of D-alanine.. It functions in the pathway cell wall biogenesis; peptidoglycan biosynthesis. In terms of biological role, penicillin-binding protein with an unknown catalytic activity. May have a specialized role in the morphogenesis of spore cortex, which is a modified form of peptidoglycan. Spore cortex formation is determined primarily by the mother cell. This chain is Stage V sporulation protein D (spoVD), found in Bacillus subtilis (strain 168).